Here is a 98-residue protein sequence, read N- to C-terminus: DNA/RNA-binding protein Alba (98 aa).

Lys-16 carries the N6-acetyllysine modification.

Belongs to the histone-like Alba family. In terms of processing, acetylated. Acetylation at Lys-16 decreases DNA-binding affinity.

It localises to the cytoplasm. The protein resides in the chromosome. In terms of biological role, binds double-stranded DNA tightly but without sequence specificity. Involved in DNA compaction. The polypeptide is DNA/RNA-binding protein Alba (Metallosphaera sedula (strain ATCC 51363 / DSM 5348 / JCM 9185 / NBRC 15509 / TH2)).